We begin with the raw amino-acid sequence, 1321 residues long: Multidrug resistance protein pgp-1 (1321 aa).

The Cytoplasmic portion of the chain corresponds to 1 to 77 (MLRNGSLRQS…YTTTLEKLLL (77 aa)). Residues 77-381 (LFIGTLVAVI…AGPQLAVLGT (305 aa)) enclose the ABC transmembrane type-1 1 domain. Residues 78-98 (FIGTLVAVITGAGLPLMSILQ) form a helical membrane-spanning segment. N-linked (GlcNAc...) asparagine glycans are attached at residues Asn115 and Asn125. A helical transmembrane segment spans residues 144–164 (AMTVGMWAAGQITVTCYLYVA). An N-linked (GlcNAc...) asparagine glycan is attached at Asn190. Transmembrane regions (helical) follow at residues 213–233 (KIGM…VAFT), 240–260 (LVML…AKSM), 321–341 (ISFG…FYIG), and 350–370 (LNFG…MALG). The Cytoplasmic portion of the chain corresponds to 371–753 (LAGPQLAVLG…LYHARPHALS (383 aa)). Residues 416 to 652 (ITVENVHFTY…QGLYYDLVTA (237 aa)) enclose the ABC transporter 1 domain. 451–458 (GSSGCGKS) lines the ATP pocket. 2 helical membrane-spanning segments follow: residues 754–774 (LFIG…YSVF) and 798–818 (LMFL…TFFM). In terms of domain architecture, ABC transmembrane type-1 2 spans 754 to 1043 (LFIGMSTATI…ATSYFPEYAK (290 aa)). A glycan (N-linked (GlcNAc...) asparagine) is linked at Asn850. 4 consecutive transmembrane segments (helical) span residues 874 to 894 (FSTV…AFFY), 895 to 915 (GWQM…GQYL), 978 to 998 (IQGL…TCAY), and 1017 to 1037 (VLRV…ATSY). Residues 1038–1321 (FPEYAKATFA…LTQKQMTEKK (284 aa)) lie on the Cytoplasmic side of the membrane. In terms of domain architecture, ABC transporter 2 spans 1077 to 1315 (VIFKNVRFAY…KGAYYKLTQK (239 aa)). Residue 1112-1119 (GPSGCGKS) coordinates ATP.

It belongs to the ABC transporter superfamily. ABCB family. Multidrug resistance exporter (TC 3.A.1.201) subfamily. As to expression, intestinal cells.

Its subcellular location is the membrane. It catalyses the reaction ATP + H2O + xenobioticSide 1 = ADP + phosphate + xenobioticSide 2.. In terms of biological role, energy-dependent efflux pump responsible for decreased drug accumulation in multidrug-resistant cells. The sequence is that of Multidrug resistance protein pgp-1 (pgp-1) from Caenorhabditis elegans.